The primary structure comprises 217 residues: Probable GTP-binding protein EngB (217 aa).

The EngB-type G domain maps to 27–201; the sequence is TGIEVAFAGR…RDKLDTWFSE (175 aa). Residues 35-42, 62-66, 80-83, 147-150, and 180-182 each bind GTP; these read GRSNAGKS, GRTQL, DLPG, TKAD, and FSS. 2 residues coordinate Mg(2+): Ser-42 and Thr-64.

This sequence belongs to the TRAFAC class TrmE-Era-EngA-EngB-Septin-like GTPase superfamily. EngB GTPase family. Mg(2+) serves as cofactor.

Its function is as follows. Necessary for normal cell division and for the maintenance of normal septation. The polypeptide is Probable GTP-binding protein EngB (Edwardsiella ictaluri (strain 93-146)).